The primary structure comprises 132 residues: Small ribosomal subunit protein uS8c (132 aa).

This sequence belongs to the universal ribosomal protein uS8 family. In terms of assembly, part of the 30S ribosomal subunit.

It is found in the plastid. The protein resides in the chloroplast. Its function is as follows. One of the primary rRNA binding proteins, it binds directly to 16S rRNA central domain where it helps coordinate assembly of the platform of the 30S subunit. The chain is Small ribosomal subunit protein uS8c (rps8) from Huperzia lucidula (Shining clubmoss).